Consider the following 161-residue polypeptide: Peptidyl-prolyl cis-trans isomerase-like 1 (161 aa).

A PPIase cyclophilin-type domain is found at 1–155 (MATDVVFDTS…DEVKIIRAKV (155 aa)).

Belongs to the cyclophilin-type PPIase family. PPIL1 subfamily.

The catalysed reaction is [protein]-peptidylproline (omega=180) = [protein]-peptidylproline (omega=0). Its function is as follows. PPIases accelerate the folding of proteins. It catalyzes the cis-trans isomerization of proline imidic peptide bonds in oligopeptides. The protein is Peptidyl-prolyl cis-trans isomerase-like 1 (cyp1) of Aspergillus fumigatus (strain ATCC MYA-4609 / CBS 101355 / FGSC A1100 / Af293) (Neosartorya fumigata).